A 182-amino-acid chain; its full sequence is CKLF-like MARVEL transmembrane domain-containing protein 3 (182 aa).

The segment covering 1–12 has biased composition (acidic residues); the sequence is MWPPDPDPDPDP. A disordered region spans residues 1–21; that stretch reads MWPPDPDPDPDPEPAGGSRPG. Residues 36 to 155 form the MARVEL domain; the sequence is FLCSLKGRLL…DFYLIFNDVA (120 aa). 3 helical membrane passes run 64 to 84, 101 to 121, and 131 to 151; these read ASAF…FLFA, MDFL…ITAI, and AAGV…YLIF.

It belongs to the chemokine-like factor family. As to expression, expressed in the leukocytes, placenta and testis.

The protein resides in the membrane. This is CKLF-like MARVEL transmembrane domain-containing protein 3 (CMTM3) from Homo sapiens (Human).